The sequence spans 395 residues: Argininosuccinate synthase (395 aa).

ATP is bound by residues 9-17 (AYSGGLDTS) and Ala37. Positions 87 and 92 each coordinate L-citrulline. Position 117 (Gly117) interacts with ATP. L-aspartate-binding residues include Thr119, Asn123, and Asp124. Residue Asn123 participates in L-citrulline binding. Residues Arg127, Ser173, Ser182, Glu258, and Tyr270 each contribute to the L-citrulline site.

Belongs to the argininosuccinate synthase family. Type 1 subfamily. As to quaternary structure, homotetramer.

The protein resides in the cytoplasm. The enzyme catalyses L-citrulline + L-aspartate + ATP = 2-(N(omega)-L-arginino)succinate + AMP + diphosphate + H(+). It participates in amino-acid biosynthesis; L-arginine biosynthesis; L-arginine from L-ornithine and carbamoyl phosphate: step 2/3. The protein is Argininosuccinate synthase of Methanospirillum hungatei JF-1 (strain ATCC 27890 / DSM 864 / NBRC 100397 / JF-1).